The sequence spans 258 residues: MKNYLLQIEYFGRNYCGWQRQSHSPSVQEELEKALSKIANQNIEVTCAGRTDTGVHATSQIVNFYSDAERPLSAWQRGVNALLPQDIKILAVQQVDNNFNSRFTAINRTYNYIIYNSATSSPIFAEHCLWENRELDIDKMNQACEYLLGEQDFSSFRSSQCQSNTPFRNIQKAEFIKQGSFIVFEVVGNAFLHHMIRNLVGSLLKVGLGFESPEWIKVVLEAKDRTQAAETAKAHGLYFVGVEYPEFSFKRQIIKLFC.

Residue D52 is the Nucleophile of the active site. Y110 contacts substrate.

This sequence belongs to the tRNA pseudouridine synthase TruA family. As to quaternary structure, homodimer.

The enzyme catalyses uridine(38/39/40) in tRNA = pseudouridine(38/39/40) in tRNA. Its function is as follows. Formation of pseudouridine at positions 38, 39 and 40 in the anticodon stem and loop of transfer RNAs. The protein is tRNA pseudouridine synthase A of Francisella tularensis subsp. novicida (strain U112).